The primary structure comprises 469 residues: Cyclin-dependent kinase 14 (469 aa).

3 positions are modified to phosphoserine: Ser24, Ser78, and Ser95. The segment at 103 to 133 is disordered; it reads FKTSSTGKESPKVRRHSSPSSPTSPKFGKAD. Ser134 is subject to Phosphoserine. The region spanning 135–419 is the Protein kinase domain; sequence YEKLEKLGEG…AQAALSHEYF (285 aa). Residues 141–149 and Lys164 each bind ATP; that span reads LGEGSYATV. The Proton acceptor role is filled by Asp256. Residues 449–469 form a disordered region; that stretch reads ESMRAFGKNNSYGKSLSNSKH. Positions 456-469 are enriched in polar residues; it reads KNNSYGKSLSNSKH.

Belongs to the protein kinase superfamily. CMGC Ser/Thr protein kinase family. CDC2/CDKX subfamily. Found in a complex with LRP6, CCNY and CAPRIN2 during G2/M stage; CAPRIN2 functions as a scaffold for the complex by binding to CCNY via its N terminus and to CDK14 via its C terminus. Interacts with CCNY; CCNY mediates its recruitment to the plasma membrane and promotes phosphorylation of LRP6. Interacts with CCDN3 and CDKN1A. Interacts with SEPT8. Interacts with 14-3-3 proteina YWHAB, YWHAE, YWHAH and YWHAQ. In terms of tissue distribution, highly expressed in brain, pancreas, kidney, heart, testis and ovary. Also detected at lower levels in other tissues except in spleen and thymus where expression is barely detected.

The protein localises to the cell membrane. The protein resides in the cytoplasm. It localises to the nucleus. The enzyme catalyses L-seryl-[protein] + ATP = O-phospho-L-seryl-[protein] + ADP + H(+). It catalyses the reaction L-threonyl-[protein] + ATP = O-phospho-L-threonyl-[protein] + ADP + H(+). With respect to regulation, serine/threonine-protein kinase activity is promoted by associated cyclins CCDN3 and CCNY and repressed by CDKN1A. In terms of biological role, serine/threonine-protein kinase involved in the control of the eukaryotic cell cycle, whose activity is controlled by an associated cyclin. Acts as a cell-cycle regulator of Wnt signaling pathway during G2/M phase by mediating the phosphorylation of LRP6 at 'Ser-1490', leading to the activation of the Wnt signaling pathway. Acts as a regulator of cell cycle progression and cell proliferation via its interaction with CCDN3. Phosphorylates RB1 in vitro, however the relevance of such result remains to be confirmed in vivo. May also play a role in meiosis, neuron differentiation and may indirectly act as a negative regulator of insulin-responsive glucose transport. This Homo sapiens (Human) protein is Cyclin-dependent kinase 14 (CDK14).